Here is a 194-residue protein sequence, read N- to C-terminus: MDVNNVELVISAVRPEQYPETDLPEYALAGRSNVGKSSFINTMIRRKSMARISQKPGKTQTLNFYKIEEALFFVDVPGYGFAKVSKTEREKWGVMIETYITSREQLRGVIQIVDLRHKPTEDDRMMYEFLKYYDIPVIVVATKADKIPRSKWQKNAKIVRETLDFDPDDKFVLFSSETKMGKDEAWQFIKEGME.

The EngB-type G domain maps to 22–194; sequence DLPEYALAGR…AWQFIKEGME (173 aa). Residues 30 to 37, 57 to 61, 75 to 78, 142 to 145, and 174 to 176 contribute to the GTP site; these read GRSNVGKS, GKTQT, DVPG, TKAD, and FSS. 2 residues coordinate Mg(2+): Ser-37 and Thr-59.

It belongs to the TRAFAC class TrmE-Era-EngA-EngB-Septin-like GTPase superfamily. EngB GTPase family. The cofactor is Mg(2+).

In terms of biological role, necessary for normal cell division and for the maintenance of normal septation. The protein is Probable GTP-binding protein EngB of Listeria innocua serovar 6a (strain ATCC BAA-680 / CLIP 11262).